The sequence spans 584 residues: ATP synthase subunit alpha, mitochondrial (584 aa).

A mitochondrion-targeting transit peptide spans 1-24 (MRRFGSKFASGLASRCALACPLAS). Residues 207–214 (DRQTGKTS) and Q464 contribute to the ATP site.

The protein belongs to the ATPase alpha/beta chains family. As to quaternary structure, F-type ATPases have 2 components, F(1) - the catalytic core - and F(o) - the membrane proton channel. F(1) has five subunits: alpha(3), beta(3), gamma(1), delta(1), epsilon(1), plus the additional subunit P18 (Tb427.05.1710) that is not present in F(1)F(o) ATP synthase from metazoa. Subunit P18 (Tb927.5.1710) interacts with the alpha subunit with a 1:1 stoichiometry; the interaction is direct. Subunit gamma is part of the central stalk. F(o) has three main subunits: a, b and c. The trypanosomal ATPase complex contains additional subunits that are not present in the F(1)F(o) ATP synthase from metazoa.

It is found in the mitochondrion. The protein resides in the mitochondrion inner membrane. Mitochondrial membrane ATP synthase (F(1)F(o) ATP synthase) produces ATP from ADP in the presence of a proton gradient across the membrane which is generated by electron transport complexes of the respiratory chain. F-type ATPases consist of two structural domains, F(1) - containing the extramembraneous catalytic core, and F(o) - containing the membrane proton channel, linked together by a central stalk and a peripheral stalk. During catalysis, ATP synthesis in the catalytic domain of F(1) is coupled via a rotary mechanism of the central stalk subunits to proton translocation. Subunits alpha and beta form the catalytic core in F(1). Rotation of the central stalk against the surrounding alpha(3)beta(3) subunits leads to hydrolysis of ATP in three separate catalytic sites on the beta subunits. Subunit alpha does not bear the catalytic high-affinity ATP-binding sites. Contrary to the procyclic, insect form that requires F(1)F(o) ATP synthase for ATP synthesis, the bloodstream form relies on ATP hydrolysis by F(1)F(o) ATP synthase to maintain its mitochondrial membrane potential. This is ATP synthase subunit alpha, mitochondrial from Trypanosoma brucei brucei.